Reading from the N-terminus, the 427-residue chain is Glutamate-1-semialdehyde 2,1-aminomutase (427 aa).

N6-(pyridoxal phosphate)lysine is present on Lys268.

Belongs to the class-III pyridoxal-phosphate-dependent aminotransferase family. HemL subfamily. It depends on pyridoxal 5'-phosphate as a cofactor.

It localises to the cytoplasm. It carries out the reaction (S)-4-amino-5-oxopentanoate = 5-aminolevulinate. It participates in porphyrin-containing compound metabolism; protoporphyrin-IX biosynthesis; 5-aminolevulinate from L-glutamyl-tRNA(Glu): step 2/2. The protein is Glutamate-1-semialdehyde 2,1-aminomutase of Methanococcus maripaludis (strain C6 / ATCC BAA-1332).